A 368-amino-acid chain; its full sequence is Alkaline phosphatase L (368 aa).

The N-terminal stretch at 1-23 is a signal peptide; sequence MFKRSLIAASLSVAALVSAQAMA.

The protein belongs to the PstS family. Homodimer.

It is found in the secreted. The protein localises to the periplasm. The enzyme catalyses a phosphate monoester + H2O = an alcohol + phosphate. Has both a phosphomonoesterase and phosphodiesterase activity. The chain is Alkaline phosphatase L from Pseudomonas aeruginosa (strain ATCC 15692 / DSM 22644 / CIP 104116 / JCM 14847 / LMG 12228 / 1C / PRS 101 / PAO1).